The sequence spans 72 residues: UPF0346 protein EF_1680 (72 aa).

Belongs to the UPF0346 family.

The polypeptide is UPF0346 protein EF_1680 (Enterococcus faecalis (strain ATCC 700802 / V583)).